A 373-amino-acid polypeptide reads, in one-letter code: Queuine tRNA-ribosyltransferase (373 aa).

Residue Asp-89 is the Proton acceptor of the active site. Residues Asp-89–Phe-93, Asp-143, Gln-185, and Gly-212 each bind substrate. Positions Gly-243–Asp-249 are RNA binding. The active-site Nucleophile is the Asp-262. The tract at residues Thr-267–Arg-271 is RNA binding; important for wobble base 34 recognition. Zn(2+) is bound by residues Cys-300, Cys-302, Cys-305, and His-331.

The protein belongs to the queuine tRNA-ribosyltransferase family. Homodimer. Within each dimer, one monomer is responsible for RNA recognition and catalysis, while the other monomer binds to the replacement base PreQ1. Requires Zn(2+) as cofactor.

The enzyme catalyses 7-aminomethyl-7-carbaguanine + guanosine(34) in tRNA = 7-aminomethyl-7-carbaguanosine(34) in tRNA + guanine. It participates in tRNA modification; tRNA-queuosine biosynthesis. Its function is as follows. Catalyzes the base-exchange of a guanine (G) residue with the queuine precursor 7-aminomethyl-7-deazaguanine (PreQ1) at position 34 (anticodon wobble position) in tRNAs with GU(N) anticodons (tRNA-Asp, -Asn, -His and -Tyr). Catalysis occurs through a double-displacement mechanism. The nucleophile active site attacks the C1' of nucleotide 34 to detach the guanine base from the RNA, forming a covalent enzyme-RNA intermediate. The proton acceptor active site deprotonates the incoming PreQ1, allowing a nucleophilic attack on the C1' of the ribose to form the product. After dissociation, two additional enzymatic reactions on the tRNA convert PreQ1 to queuine (Q), resulting in the hypermodified nucleoside queuosine (7-(((4,5-cis-dihydroxy-2-cyclopenten-1-yl)amino)methyl)-7-deazaguanosine). The sequence is that of Queuine tRNA-ribosyltransferase from Marinobacter nauticus (strain ATCC 700491 / DSM 11845 / VT8) (Marinobacter aquaeolei).